Consider the following 517-residue polypeptide: ADP-ribosylation factor GTPase-activating protein 3 (517 aa).

In terms of domain architecture, Arf-GAP spans 10 to 126; it reads LTIFKRLRSV…IKALASQATR (117 aa). The C4-type zinc-finger motif lies at 25 to 48; that stretch reads CFDCGAKNPSWASITYGVFLCIDC. The tract at residues 139 to 200 is disordered; that stretch reads VPPSSPPPKE…EQGPSVEGLN (62 aa). Positions 159 to 176 are enriched in polar residues; it reads EVSSTGWASAQPEPSLTP. Residue Ser231 is modified to Phosphoserine. A coiled-coil region spans residues 243–263; sequence NEIEKQAQAVDKMNAQEDLLS. Residues Ser271 and Ser275 each carry the phosphoserine modification. Residues 291–305 show a composition bias toward basic and acidic residues; sequence EKMNMSGKKKAESER. Disordered regions lie at residues 291-349 and 362-422; these read EKMN…SDDS and MELR…QKKF. Positions 312 to 333 are enriched in polar residues; it reads NSRSGISHSVTSDMQTIEQETP. At Ser371 the chain carries Phosphoserine. Residues 379–390 show a composition bias toward basic and acidic residues; that stretch reads YWKKETIKDTDP. Phosphoserine is present on residues Ser429, Ser452, Ser454, Ser456, Ser458, and Ser459.

The protein localises to the cytoplasm. Its subcellular location is the golgi apparatus membrane. With respect to regulation, GAP activity stimulated by phosphatidylinositol 4,5-bisphosphate (PIP2). GTPase-activating protein (GAP) for ADP ribosylation factor 1 (ARF1). Hydrolysis of ARF1-bound GTP may lead to dissociation of coatomer from Golgi-derived membranes to allow fusion with target membranes. The protein is ADP-ribosylation factor GTPase-activating protein 3 of Bos taurus (Bovine).